The sequence spans 1361 residues: Protein transport protein SEC16B homolog (1361 aa).

S46 carries the post-translational modification Phosphoserine. Disordered regions lie at residues 82-109, 487-513, 984-1013, 1025-1062, 1163-1204, 1216-1235, and 1306-1361; these read NEGA…HSDA, VDDA…GRPP, PVGG…QEAT, SSLM…GRTP, ENKS…ARGR, NPPG…VQTA, and SVNG…EVEL. Residues 491 to 503 show a composition bias toward low complexity; the sequence is PQSFQSSQLFSPS. Residues 996–1013 show a composition bias toward polar residues; the sequence is TKGNLQGNEYQHQQQEAT. Polar residues-rich tracts occupy residues 1169–1200, 1222–1234, and 1308–1325; these read IPSN…NQFS, NSHT…SVQT, and NGDN…SWSG. Low complexity predominate over residues 1326–1354; that stretch reads NFNTSFTPPTSPSTFKPVLLNSSSSSLGE.

It belongs to the SEC16 family.

The protein resides in the golgi apparatus. Its subcellular location is the endoplasmic reticulum. Its function is as follows. Required for protein transport from the endoplasmic reticulum to the Golgi apparatus. The sequence is that of Protein transport protein SEC16B homolog from Arabidopsis thaliana (Mouse-ear cress).